A 330-amino-acid chain; its full sequence is Aspartate--ammonia ligase (330 aa).

It belongs to the class-II aminoacyl-tRNA synthetase family. AsnA subfamily.

It is found in the cytoplasm. It catalyses the reaction L-aspartate + NH4(+) + ATP = L-asparagine + AMP + diphosphate + H(+). It participates in amino-acid biosynthesis; L-asparagine biosynthesis; L-asparagine from L-aspartate (ammonia route): step 1/1. The polypeptide is Aspartate--ammonia ligase (Klebsiella pneumoniae subsp. pneumoniae (strain ATCC 700721 / MGH 78578)).